The chain runs to 107 residues: Nucleoid-associated protein AZOSEA06390 (107 aa).

It belongs to the YbaB/EbfC family. In terms of assembly, homodimer.

Its subcellular location is the cytoplasm. It localises to the nucleoid. Binds to DNA and alters its conformation. May be involved in regulation of gene expression, nucleoid organization and DNA protection. This is Nucleoid-associated protein AZOSEA06390 from Aromatoleum aromaticum (strain DSM 19018 / LMG 30748 / EbN1) (Azoarcus sp. (strain EbN1)).